The primary structure comprises 223 residues: Arginine kinase (223 aa).

In terms of domain architecture, Phosphagen kinase C-terminal spans 56–222; sequence FVISTRVRLI…LELIKIEKEM (167 aa). Residues 59-63 and His-68 each bind ATP; that span reads STRVR. Cys-141 is a binding site for L-arginine. Residues 150–154 and 175–180 contribute to the ATP site; these read RASVH and RGTRGE. Residue Glu-180 participates in L-arginine binding.

This sequence belongs to the ATP:guanido phosphotransferase family.

The enzyme catalyses L-arginine + ATP = N(omega)-phospho-L-arginine + ADP + H(+). The polypeptide is Arginine kinase (Chionoecetes opilio (Atlantic snow crab)).